The sequence spans 384 residues: Lipid-A-disaccharide synthase 1 (384 aa).

This sequence belongs to the LpxB family.

It catalyses the reaction a lipid X + a UDP-2-N,3-O-bis[(3R)-3-hydroxyacyl]-alpha-D-glucosamine = a lipid A disaccharide + UDP + H(+). It functions in the pathway bacterial outer membrane biogenesis; LPS lipid A biosynthesis. Its function is as follows. Condensation of UDP-2,3-diacylglucosamine and 2,3-diacylglucosamine-1-phosphate to form lipid A disaccharide, a precursor of lipid A, a phosphorylated glycolipid that anchors the lipopolysaccharide to the outer membrane of the cell. The sequence is that of Lipid-A-disaccharide synthase 1 from Legionella pneumophila subsp. pneumophila (strain Philadelphia 1 / ATCC 33152 / DSM 7513).